A 178-amino-acid chain; its full sequence is MSNSAVAKRYAQALFELAQQKNILAEVGADLNELTKIVQESPDFLTLLNAPKFSIERKKQMVAEIFAGATPEVLHTVQLLVEKKRVNEVKLIANAYAELAAKAQGTADATVFSTRALSAEESANISTTFAKLVGKQSLNITNEIDPSLLGGIRVQIGNHIYDSSVANKLERLKRELIG.

It belongs to the ATPase delta chain family. In terms of assembly, F-type ATPases have 2 components, F(1) - the catalytic core - and F(0) - the membrane proton channel. F(1) has five subunits: alpha(3), beta(3), gamma(1), delta(1), epsilon(1). F(0) has three main subunits: a(1), b(2) and c(10-14). The alpha and beta chains form an alternating ring which encloses part of the gamma chain. F(1) is attached to F(0) by a central stalk formed by the gamma and epsilon chains, while a peripheral stalk is formed by the delta and b chains.

The protein localises to the cell membrane. F(1)F(0) ATP synthase produces ATP from ADP in the presence of a proton or sodium gradient. F-type ATPases consist of two structural domains, F(1) containing the extramembraneous catalytic core and F(0) containing the membrane proton channel, linked together by a central stalk and a peripheral stalk. During catalysis, ATP synthesis in the catalytic domain of F(1) is coupled via a rotary mechanism of the central stalk subunits to proton translocation. Functionally, this protein is part of the stalk that links CF(0) to CF(1). It either transmits conformational changes from CF(0) to CF(1) or is implicated in proton conduction. The sequence is that of ATP synthase subunit delta from Lysinibacillus sphaericus (strain C3-41).